Consider the following 211-residue polypeptide: C-type lectin domain family 2 member L (211 aa).

A disordered region spans residues 1-53 (MEPAREPPARARPPPPAARPAPAAPRPRSPAEAEARGPEGLLRRSGSGYEGST). The span at 10–28 (RARPPPPAARPAPAAPRPR) shows a compositional bias: pro residues. Ser29 is subject to Phosphoserine. Residues 66 to 86 (LLLGAIAVLLFAILVVMSILA) traverse the membrane as a helical segment. Residues 104-206 (YGRKCYYFSE…CLTTRPWVCS (103 aa)) form the C-type lectin domain. 2 disulfide bridges follow: Cys125–Cys205 and Cys184–Cys197.

Its subcellular location is the membrane. This Mus musculus (Mouse) protein is C-type lectin domain family 2 member L (Clec2l).